The sequence spans 34 residues: Photosystem II reaction center protein M (34 aa).

Residues 5 to 25 (ILAFIATALFILVPTAFLLII) form a helical membrane-spanning segment.

It belongs to the PsbM family. PSII is composed of 1 copy each of membrane proteins PsbA, PsbB, PsbC, PsbD, PsbE, PsbF, PsbH, PsbI, PsbJ, PsbK, PsbL, PsbM, PsbT, PsbX, PsbY, PsbZ, Psb30/Ycf12, at least 3 peripheral proteins of the oxygen-evolving complex and a large number of cofactors. It forms dimeric complexes.

It localises to the plastid. It is found in the chloroplast thylakoid membrane. Its function is as follows. One of the components of the core complex of photosystem II (PSII). PSII is a light-driven water:plastoquinone oxidoreductase that uses light energy to abstract electrons from H(2)O, generating O(2) and a proton gradient subsequently used for ATP formation. It consists of a core antenna complex that captures photons, and an electron transfer chain that converts photonic excitation into a charge separation. This subunit is found at the monomer-monomer interface. This chain is Photosystem II reaction center protein M, found in Coffea arabica (Arabian coffee).